Consider the following 102-residue polypeptide: Acid shock protein (102 aa).

The signal sequence occupies residues 1-21 (MKKVLALVVAAAMGLSSAAFA). A compositionally biased stretch (low complexity) spans 22–41 (AETATTPAPTATTTKAAPAK). A propeptide spanning residues 22–58 (AETATTPAPTATTTKAAPAKTTHHKKQHKAAPAQKAQ) is cleaved from the precursor. The tract at residues 22–102 (AETATTPAPT…PAKPAAQPAA (81 aa)) is disordered. Positions 80-90 (AAKKHAGKHGH) are enriched in basic residues. Over residues 91–102 (QQPAKPAAQPAA) the composition is skewed to low complexity.

Belongs to the Asr family. Proteolytic processing gives rise to the active protein.

The protein resides in the periplasm. In terms of biological role, required for growth and/or survival at acidic conditions. The protein is Acid shock protein of Shigella flexneri.